We begin with the raw amino-acid sequence, 405 residues long: Chalcone synthase (405 aa).

The active site involves Cys170.

The protein belongs to the thiolase-like superfamily. Chalcone/stilbene synthases family.

It catalyses the reaction (E)-4-coumaroyl-CoA + 3 malonyl-CoA + 3 H(+) = 2',4,4',6'-tetrahydroxychalcone + 3 CO2 + 4 CoA. Its pathway is secondary metabolite biosynthesis; flavonoid biosynthesis. Functionally, the primary product of this enzyme is 4,2',4',6'-tetrahydroxychalcone (also termed naringenin-chalcone or chalcone) which can under specific conditions spontaneously isomerize into naringenin. This chain is Chalcone synthase (CHS), found in Equisetum arvense (Field horsetail).